The sequence spans 744 residues: Adenosylcobalamin-dependent ribonucleoside-triphosphate reductase (744 aa).

A disulfide bridge connects residues C120 and C424. Residues 148–159 (SMPFSFLFDQLM) form an effector region-1 region. An effector region-2 region spans residues 169–318 (VDDNINQIPQ…ICNLIGKTVV (150 aa)). Catalysis depends on residues C413 and E415. Residues 570–631 (FHYAGYLIQR…SKNFASAGTV (62 aa)) are adenosylcobalamin-binding-1. Residues 690-729 (LKQAPKEPINKKAYEDRVAMITGDVKEVFENQNKDQKGLE) are adenosylcobalamin-binding-2.

The protein belongs to the class II ribonucleoside-triphosphate reductase family. In terms of assembly, monomer. Requires adenosylcob(III)alamin as cofactor.

It catalyses the reaction a 2'-deoxyribonucleoside 5'-triphosphate + [thioredoxin]-disulfide + H2O = a ribonucleoside 5'-triphosphate + [thioredoxin]-dithiol. Allosterically regulated by ATP and dNTP. This Lactobacillus helveticus (strain DPC 4571) protein is Adenosylcobalamin-dependent ribonucleoside-triphosphate reductase (rtpR).